The primary structure comprises 445 residues: UPF0210 protein SPT_0285 (445 aa).

The protein belongs to the UPF0210 family. In terms of assembly, homodimer.

This chain is UPF0210 protein SPT_0285, found in Streptococcus pneumoniae (strain Taiwan19F-14).